We begin with the raw amino-acid sequence, 588 residues long: Phosphomethylpyrimidine synthase (588 aa).

Substrate is bound by residues Asn-212, Met-241, Tyr-270, His-306, 326 to 328 (SRG), 367 to 370 (DGLR), and Glu-406. Residue His-410 coordinates Zn(2+). Position 433 (Tyr-433) interacts with substrate. A Zn(2+)-binding site is contributed by His-474. [4Fe-4S] cluster contacts are provided by Cys-554, Cys-557, and Cys-562.

This sequence belongs to the ThiC family. Homodimer. It depends on [4Fe-4S] cluster as a cofactor.

The enzyme catalyses 5-amino-1-(5-phospho-beta-D-ribosyl)imidazole + S-adenosyl-L-methionine = 4-amino-2-methyl-5-(phosphooxymethyl)pyrimidine + CO + 5'-deoxyadenosine + formate + L-methionine + 3 H(+). Its pathway is cofactor biosynthesis; thiamine diphosphate biosynthesis. Its function is as follows. Catalyzes the synthesis of the hydroxymethylpyrimidine phosphate (HMP-P) moiety of thiamine from aminoimidazole ribotide (AIR) in a radical S-adenosyl-L-methionine (SAM)-dependent reaction. The chain is Phosphomethylpyrimidine synthase from Bartonella quintana (strain Toulouse) (Rochalimaea quintana).